The following is a 180-amino-acid chain: Acireductone dioxygenase (180 aa).

Residues His-96, His-98, Glu-102, and His-140 each contribute to the Fe(2+) site. His-96, His-98, Glu-102, and His-140 together coordinate Ni(2+).

It belongs to the acireductone dioxygenase (ARD) family. Monomer. Fe(2+) is required as a cofactor. Ni(2+) serves as cofactor.

It carries out the reaction 1,2-dihydroxy-5-(methylsulfanyl)pent-1-en-3-one + O2 = 3-(methylsulfanyl)propanoate + CO + formate + 2 H(+). The enzyme catalyses 1,2-dihydroxy-5-(methylsulfanyl)pent-1-en-3-one + O2 = 4-methylsulfanyl-2-oxobutanoate + formate + 2 H(+). The protein operates within amino-acid biosynthesis; L-methionine biosynthesis via salvage pathway; L-methionine from S-methyl-5-thio-alpha-D-ribose 1-phosphate: step 5/6. Functionally, catalyzes 2 different reactions between oxygen and the acireductone 1,2-dihydroxy-3-keto-5-methylthiopentene (DHK-MTPene) depending upon the metal bound in the active site. Fe-containing acireductone dioxygenase (Fe-ARD) produces formate and 2-keto-4-methylthiobutyrate (KMTB), the alpha-ketoacid precursor of methionine in the methionine recycle pathway. Ni-containing acireductone dioxygenase (Ni-ARD) produces methylthiopropionate, carbon monoxide and formate, and does not lie on the methionine recycle pathway. This chain is Acireductone dioxygenase, found in Synechococcus sp. (strain WH7803).